The primary structure comprises 212 residues: Cytidylate kinase (212 aa).

7 to 15 contacts ATP; that stretch reads GPAASGKGT.

This sequence belongs to the cytidylate kinase family. Type 1 subfamily.

It localises to the cytoplasm. The catalysed reaction is CMP + ATP = CDP + ADP. It catalyses the reaction dCMP + ATP = dCDP + ADP. In Rhodopseudomonas palustris (strain BisB18), this protein is Cytidylate kinase.